We begin with the raw amino-acid sequence, 340 residues long: Adenosine kinase (340 aa).

The active site involves Asp293.

This sequence belongs to the carbohydrate kinase PfkB family. The cofactor is Mg(2+).

It catalyses the reaction adenosine + ATP = AMP + ADP + H(+). The protein operates within purine metabolism; AMP biosynthesis via salvage pathway; AMP from adenosine: step 1/1. Its function is as follows. ATP dependent phosphorylation of adenosine and other related nucleoside analogs to monophosphate derivatives. ADO1 does not play a major role in adenine utilization in yeast. Its physiological role could primarily be to recycle adenosine produced by the methyl cycle. The chain is Adenosine kinase from Saccharomyces cerevisiae (strain ATCC 204508 / S288c) (Baker's yeast).